A 917-amino-acid polypeptide reads, in one-letter code: MKFEKGKVRILPKPSPTPTNPQTPLPLLPAQTKPVNSKRKSAASTPGNESKKSRKSNSTASTPNSATPTSVGTPPQKTSKPTGHRPVTSCTFCRQHKIKCNASDNYPNPCERCKKMGLKCEIDPEFRPRKGSQIQSLKSDVDELKAKIEMLTKNESLLTQALNQHNLNHASQQQQSSGSQSQQQHPPNPQRALSYTSANSSPQVAFSNASPIPSVTSIQQNAPLTHENSDNSPYALNTPENIEELQPISEFILGDVTLPLNRANELHDKFMTTHLPFLPIIISRSATELYHKSQLLFWAVILTASLSEPEPKLYMSLASLIKQLAIETCWIKTPRSTHVIQALIILSIWPLPNEKVLDDCSYRFVGLAKNLSLQLGLHRGGEFIQEFSRNQVSLGPDAERWRTRSWLAVFFCEQFWSSLLGLPPSINTTDYLLENARVDKSLPKNFRCLISLSIFQCKLVNIMGISVTRPDGLLEPSNRAGSLSLLDRELERLRFKLQFEEGGPIEVYYLYIKLMICCFAFLPGTPIEDQVKYVSFAYLSATRIVTIVSKMVNDISLIELPIYIRQAVTYSVFMLFKLHLSRYLIDKYVDSARQSIVTVHRLFRNTLSSWKDLQNDISRTAKVLENLNMVLYNYPEIFLNDSENEDSSIITRMRSHLTASLFYDLVWCVHEARRRSVLDKGKRQAQPNKKILPLPFYNQITKDDFKTITTTSPNGTTITTLVPTDQAMNQAKSKSFDSSKPLEINGIPLPMLEATGSTREVLDSLPSQSLPSQAPTLQQYPMQQDQQQQEPSQQQQQKHSQQSQQYQQQQQSNQQQPHLQHQRQFQQSPPPQFSMISSTPPLQQPPFILANSPLPQTYLPKIDEMNMSPEVKQENSVAPFASQITNFFDQQTSGWFNNDNQDDDFLGWFDVNMMQEK.

The segment at 1–88 (MKFEKGKVRI…SKPTGHRPVT (88 aa)) is disordered. A compositionally biased stretch (pro residues) spans 13 to 27 (KPSPTPTNPQTPLPL). Positions 56 to 70 (SNSTASTPNSATPTS) are enriched in low complexity. Positions 71–81 (VGTPPQKTSKP) are enriched in polar residues. The zn(2)-C6 fungal-type DNA-binding region spans 90–120 (CTFCRQHKIKCNASDNYPNPCERCKKMGLKC). The stretch at 129–164 (RKGSQIQSLKSDVDELKAKIEMLTKNESLLTQALNQ) forms a coiled coil. 2 disordered regions span residues 168 to 212 (NHAS…ASPI) and 778 to 849 (QQYP…PFIL). Residues 171–184 (SQQQQSSGSQSQQQ) are compositionally biased toward low complexity. The segment covering 191 to 212 (RALSYTSANSSPQVAFSNASPI) has biased composition (polar residues). The segment covering 778-827 (QQYPMQQDQQQQEPSQQQQQKHSQQSQQYQQQQQSNQQQPHLQHQRQFQQ) has biased composition (low complexity).

In terms of assembly, interacts with SSN3 and SFU1. Post-translationally, phosphorylated by SSN3 under iron-depleted conditions which leads to nuclear localization.

It is found in the cytoplasm. The protein localises to the nucleus. In terms of biological role, transcription factor which plays an essential role in virulence by activating the transcription of iron uptake genes such as FRE7 in iron-poor environments such as the host bloodstream and internal organs. Promotes commensalism in a mouse model of gastrointestinal infection. This is Transcriptional regulatory protein SEF1 (SEF1) from Candida albicans (strain SC5314 / ATCC MYA-2876) (Yeast).